A 383-amino-acid chain; its full sequence is Putative F-box/kelch-repeat protein At1g62270 (383 aa).

Residues 6-51 (TSSFSSLPWDLVEDILARVPATSLKRLRSTCKQWNFLFNDQIFTKM) enclose the F-box domain. 3 Kelch repeats span residues 110-158 (KVFH…YGNY), 160-211 (SCYN…LRGN), and 349-383 (TVYI…LVQI).

In Arabidopsis thaliana (Mouse-ear cress), this protein is Putative F-box/kelch-repeat protein At1g62270.